Consider the following 142-residue polypeptide: Hemoglobin subunit alpha-A (142 aa).

In terms of domain architecture, Globin spans Val-2 to Arg-142. His-59 provides a ligand contact to O2. His-88 is a heme b binding site.

This sequence belongs to the globin family. As to quaternary structure, heterotetramer of two alpha chains and two beta chains. Red blood cells.

In terms of biological role, involved in oxygen transport from the lung to the various peripheral tissues. The chain is Hemoglobin subunit alpha-A (HBAA) from Anser indicus (Bar-headed goose).